The following is a 174-amino-acid chain: Methylated protein MJ0556 (174 aa).

2 CBS domains span residues 28 to 87 and 91 to 156; these read MISG…YLNV and MLKN…IIKE.

In terms of processing, methylated at an undetermined residue between Ser-2 and Asp-26.

The polypeptide is Methylated protein MJ0556 (Methanocaldococcus jannaschii (strain ATCC 43067 / DSM 2661 / JAL-1 / JCM 10045 / NBRC 100440) (Methanococcus jannaschii)).